A 276-amino-acid chain; its full sequence is N-acyl homoserine lactonase AiiB (276 aa).

Residues His111, His113, His116, His191, Asp213, and His259 each contribute to the Zn(2+) site.

This sequence belongs to the metallo-beta-lactamase superfamily. It depends on Zn(2+) as a cofactor.

It catalyses the reaction an N-acyl-L-homoserine lactone + H2O = an N-acyl-L-homoserine + H(+). The chain is N-acyl homoserine lactonase AiiB from Rhizobium rhizogenes (strain K84 / ATCC BAA-868) (Agrobacterium radiobacter).